The chain runs to 430 residues: MPSVVVVGTQWGDEGKGKITDFLSSNAEVIARYQGGDNAGHTIVIDGKKFKLHLIPSGIFFPEKISVIGNGVVVNPKSLIEEIAYLAENGVSAESLRISDRAHVILPYHKKLDFLQEEAKGDKKIGTTIKGIGPAYMDKAARVGIRVADLLDKEIFEERLRTNLEAKNREFVKMYDSEPIEFEEIFEEYYEYGQQLKKYVTDTSVILNDALDAGKRVLFEGAQGVMLDIDQGTYPFVTSSNPVAGGVTIGSGVGPSKISKVVGVCKAYTSRVGDGPFPTELFDEVGHQIREVGHEYGTTTGRPRRVGWFDSVVMRHAKRVSGLTNLSLNSIDVLSGLETVKICVAYERSNGEQITHYPASLKELADCKPIYEELPGWSEDITSCRTLEELPEAARNYVRRVGELVGVRISTFSVGPGREQTNVLESVWGV.

GTP contacts are provided by residues 12 to 18 (GDEGKGK) and 40 to 42 (GHT). The Proton acceptor role is filled by aspartate 13. Residues aspartate 13 and glycine 40 each coordinate Mg(2+). Residues 13-16 (DEGK), 38-41 (NAGH), threonine 128, arginine 142, glutamine 223, threonine 238, and arginine 302 each bind IMP. The active-site Proton donor is the histidine 41. Position 298–304 (298–304 (TTTGRPR)) interacts with substrate. Residues arginine 304, 330–332 (SID), and 413–415 (SVG) each bind GTP.

It belongs to the adenylosuccinate synthetase family. In terms of assembly, homodimer. Mg(2+) is required as a cofactor.

It is found in the cytoplasm. The catalysed reaction is IMP + L-aspartate + GTP = N(6)-(1,2-dicarboxyethyl)-AMP + GDP + phosphate + 2 H(+). Its pathway is purine metabolism; AMP biosynthesis via de novo pathway; AMP from IMP: step 1/2. In terms of biological role, plays an important role in the de novo pathway of purine nucleotide biosynthesis. Catalyzes the first committed step in the biosynthesis of AMP from IMP. This chain is Adenylosuccinate synthetase, found in Lactococcus lactis subsp. lactis (strain IL1403) (Streptococcus lactis).